A 74-amino-acid chain; its full sequence is uncharacterized protein (74 aa).

The tract at residues 39–74 (SSPQAPGTLKPRALVRPSPGPVQENHLSEAQFPPKL) is disordered.

This is an uncharacterized protein from Homo sapiens (Human).